We begin with the raw amino-acid sequence, 270 residues long: 4-hydroxy-tetrahydrodipicolinate reductase (270 aa).

NAD(+) is bound by residues 11-16 and Glu37; that span reads GAGGRM. An NADP(+)-binding site is contributed by Arg38. NAD(+) is bound by residues 101-103 and 125-128; these read GTT and APNM. His158 functions as the Proton donor/acceptor in the catalytic mechanism. Residue His159 coordinates (S)-2,3,4,5-tetrahydrodipicolinate. Catalysis depends on Lys162, which acts as the Proton donor. 168-169 is a binding site for (S)-2,3,4,5-tetrahydrodipicolinate; it reads GT.

This sequence belongs to the DapB family.

The protein localises to the cytoplasm. It carries out the reaction (S)-2,3,4,5-tetrahydrodipicolinate + NAD(+) + H2O = (2S,4S)-4-hydroxy-2,3,4,5-tetrahydrodipicolinate + NADH + H(+). The catalysed reaction is (S)-2,3,4,5-tetrahydrodipicolinate + NADP(+) + H2O = (2S,4S)-4-hydroxy-2,3,4,5-tetrahydrodipicolinate + NADPH + H(+). Its pathway is amino-acid biosynthesis; L-lysine biosynthesis via DAP pathway; (S)-tetrahydrodipicolinate from L-aspartate: step 4/4. Functionally, catalyzes the conversion of 4-hydroxy-tetrahydrodipicolinate (HTPA) to tetrahydrodipicolinate. This is 4-hydroxy-tetrahydrodipicolinate reductase from Shewanella oneidensis (strain ATCC 700550 / JCM 31522 / CIP 106686 / LMG 19005 / NCIMB 14063 / MR-1).